We begin with the raw amino-acid sequence, 462 residues long: MAQTVVVGLGRSGQGAARLLQATGHPVSVIDSGQGEQLEKKAEGLRQQGVEVQLQAPLAIDSFRPWLDQLQRVVISPGVPWDHPTLDDLRQRGVAVDGEMAVAWDALKHIPWVGITGTNGKTTVTHLLSHVLCQAGLAAPMGGNMGVSAAEMALNLQQEHTTAPDWLVMELSSYQIEAAKRIRPRIGIWTTLTPDHLERHGTVEAYRAIKRGLLERSDHAIFNADDPDLRQQRQSWTGGTWVSAESAQPDGHPADLWINGKGWVCDRSQPLFPAEALAMPGAHNRQNLLLVTAAARQIGLSPASIVAGLRSFPGVPHRLEPVGRIGNAQVFNDSKATNYDAAAVGLKAMQGPVVVLAGGSTKQGDATGWLEELNRKACAVVLFGAGTEELHGLITGANFTGELTRRTDLTSAVEEAVRSAEALGATSLLLSPACASFDQYRDFEARGDHFKQLIHQVQSGLN.

ATP is bound at residue 117 to 123; the sequence is GTNGKTT.

It belongs to the MurCDEF family.

Its subcellular location is the cytoplasm. It catalyses the reaction UDP-N-acetyl-alpha-D-muramoyl-L-alanine + D-glutamate + ATP = UDP-N-acetyl-alpha-D-muramoyl-L-alanyl-D-glutamate + ADP + phosphate + H(+). The protein operates within cell wall biogenesis; peptidoglycan biosynthesis. Cell wall formation. Catalyzes the addition of glutamate to the nucleotide precursor UDP-N-acetylmuramoyl-L-alanine (UMA). The chain is UDP-N-acetylmuramoylalanine--D-glutamate ligase from Parasynechococcus marenigrum (strain WH8102).